A 1729-amino-acid chain; its full sequence is MKVSTLRESSAMASPLPREMEEELVPTGSEPGDTRAKPPVKPKPRALPAKPALPAKPSLLVPVGPRPPRGPLAELPSARKMNMLAGPQPYGGSKRPLPFAPRPAVEASTGGEATQETGKEEAGKEEPPPLTPPARCAAPGGVRKAPAPFRPASERFAATTVEEILAKMEQPRKEVLASPDRLWGSRLTFNHDGSSRYGPRTYGTTTAPRDEDGSTLFRGWSQEGPVKSPAECREEHSKTPEERSLPSDLAFNGDLAKAASSELPADISKPWIPSSPAPSSENGGPASPGLPAEASGSGPGSPHLHPPDKSSPCHSQLLEAQTPEASQASPCPAVTPSAPSAALPDEGSRHTPSPGLPAEGAPEAPRPSSPPPEVLEPHSLDQPPATSPRPLIEVGELLDLTRTFPSGGEEEAKGDAHLRPTSLVQRRFSEGVLQSPSQDQEKLGGSLAALPQGQGSQLALDRPFGAESNWSLSQSFEWTFPTRPSGLGVWRLDSPPPSPITEASEAAEAAEAGNLAVSSREEGVSQQGQGAGSAPSGSGSSWVQGDDPSMSLTQKGDGESQPQFPAVPLEPLPTTEGTPGLPLQQAEERYESQEPLAGQESPLPLATREAALPILEPVLGQEQPAAPDQPCVLFADAPEPGQALPVEEEAVTLARAETTQARTEAQDLCRASPEPPGPESSSRWLDDLLASPPPSGGGARRGAGAELKDTQSPSTCSEGLLGWSQKDLQSEFGITGDPQPSSFSPSSWCQGASQDYGLGGASPRGDPGLGERDWTSKYGQGAGEGSTREWASRCGIGQEEMEASSSQDQSKVSAPGVLTAQDRVVGKPAQLGTQRSQEADVQDWEFRKRDSQGTYSSRDAELQDQEFGKRDSLGTYSSRDVSLGDWEFGKRDSLGAYASQDANEQGQDLGKRDHHGRYSSQDADEQDWEFQKRDVSLGTYGSRAAEPQEQEFGKSAWIRDYSSGGSSRTLDAQDRSFGTRPLSSGFSPEEAQQQDEEFEKKIPSVEDSLGEGSRDAGRPGERGSGGLFSPSTAHVPDGALGQRDQSSWQNSDASQEVGGHQERQQAGAQGPGSADLEDGEMGKRGWVGEFSLSVGPQREAAFSPGQQDWSRDFCIEASERSYQFGIIGNDRVSGAGFSPSSKMEGGHFVPPGKTTAGSVDWTDQLGLRNLEVSSCVGSGGSSEARESAVGQMGWSGGLSLRDMNLTGCLESGGSEEPGGIGVGEKDWTSDVNVKSKDLAEVGEGGGHSQARESGVGQTDWSGVEAGEFLKSRERGVGQADWTPDLGLRNMAPGAVCSPGESKELGVGQMDWGNNLGLRDLEVTCDPDSGGSQGLRGCGVGQMDWTQDLAPQNVELFGAPSEAREHGVGGVSQCPEPGLRHNGSLSPGLEARDPLEARELGVGETSGPETQGEDYSSSSLEPHPADPGMETGEALSFGASPGRCPARPPPSGSQGLLEEMLAASSSKAVARRESAASGLGGLLEEEGAGAGAAQEEVLEPGRDSPPSWRPQPDGEASQTEDVDGTWGSSAARWSDQGPAQTSRRPSQGPPARSPSQDFSFIEDTEILDSAMYRSRANLGRKRGHRAPVIRPGGTLGLSEAADSDAHLFQDSTEPRASRVPSSDEEVVEEPQSRRTRMSLGTKGLKVNLFPGLSPSALKAKLRPRNRSAEEGELAESKSSQKESAVQRSKSCKVPGLGKPLTLPPKPEKSSGSEGSSPNWLQALKLKKKKV.

Over residues 1–12 (MKVSTLRESSAM) the composition is skewed to polar residues. Residues 1 to 151 (MKVSTLRESS…VRKAPAPFRP (151 aa)) form a disordered region. The residue at position 14 (Ser-14) is a Phosphoserine. The span at 46–63 (ALPAKPALPAKPSLLVPV) shows a compositional bias: low complexity. Over residues 117–127 (TGKEEAGKEEP) the composition is skewed to basic and acidic residues. Thr-131 carries the post-translational modification Phosphothreonine. Residues Ser-178, Ser-221, and Ser-228 each carry the phosphoserine modification. Disordered regions lie at residues 184-450 (GSRL…LAAL), 484-603 (PSGL…ESPL), and 657-880 (ETTQ…SSRD). Residues 210 to 1572 (DEDGSTLFRG…TEILDSAMYR (1363 aa)) are acidic. A compositionally biased stretch (basic and acidic residues) spans 230 to 245 (AECREEHSKTPEERSL). Thr-239 is subject to Phosphothreonine. Phosphoserine is present on residues Ser-287 and Ser-301. The span at 352–363 (PSPGLPAEGAPE) shows a compositional bias: low complexity. The segment covering 364–374 (APRPSSPPPEV) has biased composition (pro residues). A phosphoserine mark is found at Ser-429, Ser-435, Ser-437, Ser-494, and Ser-498. Composition is skewed to low complexity over residues 500-512 (ITEASEAAEAAEA), 524-541 (VSQQGQGAGSAPSGSGSS), and 572-583 (LPTTEGTPGLPL). A Phosphothreonine modification is found at Thr-501. A phosphoserine mark is found at Ser-601, Ser-672, Ser-691, Ser-695, Ser-712, Ser-724, Ser-744, Ser-762, and Ser-806. Over residues 738–753 (PQPSSFSPSSWCQGAS) the composition is skewed to polar residues. Polar residues predominate over residues 803-812 (ASSSQDQSKV). Thr-833 bears the Phosphothreonine mark. Phosphoserine is present on residues Ser-836, Ser-851, Ser-872, Ser-877, Ser-882, and Ser-893. The span at 858-872 (RDAELQDQEFGKRDS) shows a compositional bias: basic and acidic residues. Tyr-897 carries the post-translational modification Phosphotyrosine. Positions 897–1083 (YASQDANEQG…ADLEDGEMGK (187 aa)) are disordered. 4 positions are modified to phosphoserine: Ser-899, Ser-920, Ser-936, and Ser-976. Thr-979 is modified (phosphothreonine). Phosphoserine occurs at positions 983, 987, 1004, 1008, 1013, 1024, 1029, 1054, 1073, 1091, 1103, 1133, 1138, 1158, 1178, 1248, and 1253. The segment covering 1012–1021 (GSRDAGRPGE) has biased composition (basic and acidic residues). The segment covering 1043-1054 (RDQSSWQNSDAS) has biased composition (polar residues). A disordered region spans residues 1240–1302 (EVGEGGGHSQ…GAVCSPGESK (63 aa)). Residue Thr-1282 is modified to Phosphothreonine. Ser-1297, Ser-1328, Ser-1331, Ser-1383, and Ser-1385 each carry phosphoserine. The segment at 1362–1561 (AREHGVGGVS…SPSQDFSFIE (200 aa)) is disordered. Residues 1389-1400 (EARDPLEARELG) show a composition bias toward basic and acidic residues. The segment covering 1406 to 1419 (GPETQGEDYSSSSL) has biased composition (polar residues). Residues Ser-1435, Ser-1439, Ser-1450, Ser-1452, Ser-1473, Ser-1476, Ser-1503, and Ser-1506 each carry the phosphoserine modification. Residues 1450–1542 (SGSQGLLEEM…SDQGPAQTSR (93 aa)) are tankyrase-binding. Thr-1518 carries the phosphothreonine modification. Ser-1533, Ser-1545, and Ser-1558 each carry phosphoserine. Position 1563 is a phosphothreonine (Thr-1563). Residues 1575–1729 (ANLGRKRGHR…QALKLKKKKV (155 aa)) form a disordered region. The span at 1577 to 1586 (LGRKRGHRAP) shows a compositional bias: basic residues. Residues 1602–1615 (SDAHLFQDSTEPRA) show a composition bias toward basic and acidic residues. Phosphoserine occurs at positions 1620, 1621, and 1631. The short motif at 1629–1635 (PQSRRTR) is the Nuclear localization signal element. Position 1644 is an N6-methyllysine (Lys-1644). Phosphoserine is present on residues Ser-1652, Ser-1666, and Ser-1715. Residues 1665–1679 (RSAEEGELAESKSSQ) show a composition bias toward basic and acidic residues. A Nuclear localization signal motif is present at residues 1723–1729 (KLKKKKV).

In terms of assembly, binds to the ANK repeat domain of TNKS1 and TNKS2. ADP-ribosylated by TNKS1 (in vitro). In terms of tissue distribution, detected in testis, ovary, lung, skeletal muscle, heart, prostate and pancreas, and at very low levels in brain and peripheral blood leukocytes.

It is found in the nucleus. The protein localises to the cytoplasm. Its subcellular location is the cytoskeleton. The protein resides in the chromosome. This chain is 182 kDa tankyrase-1-binding protein (TNKS1BP1), found in Homo sapiens (Human).